The sequence spans 938 residues: Breast cancer type 2 susceptibility protein homolog (938 aa).

Composition is skewed to basic and acidic residues over residues 320–339 and 409–425; these read LEPSFQKEQKSSKDSNESKI and NSIKRTDEEQPEKETPN. 2 disordered regions span residues 320 to 359 and 409 to 434; these read LEPSFQKEQKSSKDSNESKIRAPSKPSCDITEKNEGTTVL and NSIKRTDEEQPEKETPNKSRSTSSHQ. 3 BRCA2 repeats span residues 537–571, 638–672, and 713–747; these read AEPEFCGFRTASNKAIPISEKMKIKTAEFMAEFQY, NEPQFFGFRTASKKAIEITEAMEKRGAMFLAQSRA, and SETEFFGFRTASNKGIVISENTKMKVAQFMSEFQA. Residues 870–879 show a composition bias toward polar residues; sequence SSTETSTSCA. The segment at 870-938 is disordered; it reads SSTETSTSCA…RRLGLSRSRY (69 aa). Positions 898–915 are enriched in basic and acidic residues; it reads ADRDLNRSKDCAKNRQDA. The span at 926-938 shows a compositional bias: basic residues; sequence KKSRRLGLSRSRY.

Interacts with Rad9 and spn-A/Rad51.

The protein localises to the nucleus. Involved in and required for double-strand break repair by meiotic and mitotic homologous recombination. During meiosis, has a dual role in the repair of meiotic double-stranded breaks and the efficient activation of the meiotic recombination checkpoint. This is Breast cancer type 2 susceptibility protein homolog from Drosophila sechellia (Fruit fly).